We begin with the raw amino-acid sequence, 147 residues long: Protein phosphatase 1 regulatory subunit 14B (147 aa).

Residues 1-15 (MADSGPAGGAALAAP) are compositionally biased toward low complexity. The tract at residues 1 to 55 (MADSGPAGGAALAAPAPGPGSGGAGPRVYFQSPPGAAGEGPGGADDEGPVRRQGK) is disordered. Position 2 is an N-acetylalanine (Ala2). At Ser21 the chain carries Phosphoserine. Tyr29 is subject to Phosphotyrosine. Ser32 is subject to Phosphoserine. Thr57 carries the phosphothreonine modification. Residues 61-103 (DRKELRKRLNLEEWILEQLTRLYDCQEEEIPELEIDVDELLDM) adopt a coiled-coil conformation.

It belongs to the PP1 inhibitor family. In terms of processing, phosphorylated primarily on Thr-57 by PKC (in vitro). An unknown Ser is also phosphorylated by PKC (in vitro).

The protein localises to the cytoplasm. Functionally, inhibitor of PPP1CA. Has over 50-fold higher inhibitory activity when phosphorylated. The protein is Protein phosphatase 1 regulatory subunit 14B (PPP1R14B) of Sus scrofa (Pig).